A 133-amino-acid chain; its full sequence is Small ribosomal subunit protein bS6 (133 aa).

It belongs to the bacterial ribosomal protein bS6 family.

Binds together with bS18 to 16S ribosomal RNA. This chain is Small ribosomal subunit protein bS6, found in Chlorobium luteolum (strain DSM 273 / BCRC 81028 / 2530) (Pelodictyon luteolum).